The primary structure comprises 517 residues: L-amino-acid oxidase (517 aa).

The N-terminal stretch at 1–18 is a signal peptide; the sequence is MNVFFMFSLLFLAALESC. The cysteines at positions 29 and 192 are disulfide-linked. FAD contacts are provided by residues 62–63, 82–83, Arg90, and 106–109; these read MA, EA, and GPMR. Arg109 is a binding site for substrate. An N-linked (GlcNAc...) asparagine glycan is attached at Asn191. Val280 contacts FAD. An intrachain disulfide couples Cys350 to Cys431. Tyr391 serves as a coordination point for substrate. FAD is bound by residues Glu476 and 483–488; that span reads GWIDST. 483–484 contributes to the substrate binding site; the sequence is GW.

The protein belongs to the flavin monoamine oxidase family. FIG1 subfamily. Homodimer; non-covalently linked. FAD is required as a cofactor. N-glycosylated. In terms of tissue distribution, expressed by the venom gland.

It is found in the secreted. It catalyses the reaction an L-alpha-amino acid + O2 + H2O = a 2-oxocarboxylate + H2O2 + NH4(+). Catalyzes an oxidative deamination of predominantly hydrophobic and aromatic L-amino acids, thus producing hydrogen peroxide that may contribute to the diverse toxic effects of this enzyme. Exhibits diverse biological activities, such as hemorrhage, hemolysis, edema, apoptosis of vascular endothelial cells or tumor cell lines, antibacterial and antiparasitic activities, as well as regulation of platelet aggregation. Its effect on platelets is controversial, since it either induces aggregation or inhibits agonist-induced aggregation. These different effects are probably due to different experimental conditions. The protein is L-amino-acid oxidase of Demansia vestigiata (Lesser black whip snake).